A 433-amino-acid polypeptide reads, in one-letter code: Signal recognition particle 54 kDa protein (433 aa).

GTP contacts are provided by residues 106–113 (GVEGSGKT), 186–190 (DTAGR), and 244–247 (TKMD).

The protein belongs to the GTP-binding SRP family. SRP54 subfamily. As to quaternary structure, part of the signal recognition particle protein translocation system, which is composed of SRP and FtsY. Archaeal SRP consists of a 7S RNA molecule of 300 nucleotides and two protein subunits: SRP54 and SRP19.

Its subcellular location is the cytoplasm. It carries out the reaction GTP + H2O = GDP + phosphate + H(+). Functionally, involved in targeting and insertion of nascent membrane proteins into the cytoplasmic membrane. Binds to the hydrophobic signal sequence of the ribosome-nascent chain (RNC) as it emerges from the ribosomes. The SRP-RNC complex is then targeted to the cytoplasmic membrane where it interacts with the SRP receptor FtsY. This chain is Signal recognition particle 54 kDa protein, found in Pyrobaculum islandicum (strain DSM 4184 / JCM 9189 / GEO3).